The chain runs to 384 residues: BTB and MATH domain-containing protein 34 (384 aa).

Residues 41 to 127 (LNGNTTLKRI…ELKFQKEQLK (87 aa)) are a coiled coil. The MATH domain maps to 167–277 (EFSHTFNSVA…VFNFGEYEEI (111 aa)). Residues 317-380 (SDAVMIVKDE…LYGEPALTGR (64 aa)) form the BTB domain.

The chain is BTB and MATH domain-containing protein 34 (bath-34) from Caenorhabditis elegans.